A 407-amino-acid chain; its full sequence is Serine hydroxymethyltransferase (407 aa).

Residues Leu120 and 124 to 126 (GHL) contribute to the (6S)-5,6,7,8-tetrahydrofolate site. Residue Lys229 is modified to N6-(pyridoxal phosphate)lysine.

The protein belongs to the SHMT family. As to quaternary structure, homodimer. The cofactor is pyridoxal 5'-phosphate.

It is found in the cytoplasm. The catalysed reaction is (6R)-5,10-methylene-5,6,7,8-tetrahydrofolate + glycine + H2O = (6S)-5,6,7,8-tetrahydrofolate + L-serine. The protein operates within one-carbon metabolism; tetrahydrofolate interconversion. It functions in the pathway amino-acid biosynthesis; glycine biosynthesis; glycine from L-serine: step 1/1. Its function is as follows. Catalyzes the reversible interconversion of serine and glycine with tetrahydrofolate (THF) serving as the one-carbon carrier. This reaction serves as the major source of one-carbon groups required for the biosynthesis of purines, thymidylate, methionine, and other important biomolecules. Also exhibits THF-independent aldolase activity toward beta-hydroxyamino acids, producing glycine and aldehydes, via a retro-aldol mechanism. The chain is Serine hydroxymethyltransferase from Deinococcus deserti (strain DSM 17065 / CIP 109153 / LMG 22923 / VCD115).